The chain runs to 251 residues: Phosphate import ATP-binding protein PstB (251 aa).

Positions 5–246 (FDIRNFSVYY…PEKELTEKYL (242 aa)) constitute an ABC transporter domain. Residue 37–44 (GPSGCGKS) coordinates ATP.

The protein belongs to the ABC transporter superfamily. Phosphate importer (TC 3.A.1.7) family. The complex is composed of two ATP-binding proteins (PstB), two transmembrane proteins (PstC and PstA) and a solute-binding protein (PstS).

It is found in the cell membrane. It carries out the reaction phosphate(out) + ATP + H2O = ADP + 2 phosphate(in) + H(+). Part of the ABC transporter complex PstSACB involved in phosphate import. Responsible for energy coupling to the transport system. The polypeptide is Phosphate import ATP-binding protein PstB (Archaeoglobus fulgidus (strain ATCC 49558 / DSM 4304 / JCM 9628 / NBRC 100126 / VC-16)).